The sequence spans 439 residues: Probable aspartic proteinase GIP2 (439 aa).

An N-terminal signal peptide occupies residues 1-23; the sequence is MASSCCLHAILLCSLLFITSTTA. In terms of domain architecture, Peptidase A1 spans 47-420; it reads YLTQIQQRTP…DLARSRLGFT (374 aa). N-linked (GlcNAc...) asparagine glycosylation is found at N116, N280, N323, and N434.

It belongs to the peptidase A1 family. In terms of assembly, interacts with the Phytophtora parasitica xyloglucanase XEG1 and xyloglucanase-like XLP1. Possesses stronger binding affinity with XLP1, a truncated paralog of P.parasitica XEG1 which has no enzyme activity.

The protein resides in the secreted. The protein localises to the extracellular space. Its subcellular location is the apoplast. In terms of biological role, involved in plant defense against Phytophtora parasitica. Contributes positively to Nicotiana resistance against P.parasitica. Binds the P.parasitica xyloglucanase XEG1 and inhibits its cell wall degrading enzyme activity and its contribution as P.parasitica virulence factor. XEG1 acts as an important virulence factor during P.parasitica infection but also acts as a pathogen-associated molecular pattern (PAMP) in Nictotiana species, where it can trigger defense responses including cell death. Functionally, (Microbial infection) Possesses stronger binding affinity with XLP1, a truncated paralog of P.parasitica XEG1 which has no enzyme activity. Is impaired in its inhibitor activity towards the P.parasitica xyloglucanase XEG1 when hijacked by XLP1 binding. This Nicotiana benthamiana protein is Probable aspartic proteinase GIP2.